The sequence spans 826 residues: Lon protease (826 aa).

The 196-residue stretch at 26 to 221 (LPMLPVRDVV…AVNGFVSREV (196 aa)) folds into the Lon N-terminal domain. An ATP-binding site is contributed by 373 to 380 (GPPGVGKT). One can recognise a Lon proteolytic domain in the interval 609–790 (EPQIGLATGL…NEVLEKALLP (182 aa)). Active-site residues include Ser-696 and Lys-739. The interval 788 to 826 (LLPAEKKKAPPKKKPPKKAAKPKAKKTQPKAKTTEAADK) is disordered. A compositionally biased stretch (basic residues) spans 796-816 (APPKKKPPKKAAKPKAKKTQP).

This sequence belongs to the peptidase S16 family. Homohexamer. Organized in a ring with a central cavity.

The protein resides in the cytoplasm. It catalyses the reaction Hydrolysis of proteins in presence of ATP.. Its function is as follows. ATP-dependent serine protease that mediates the selective degradation of mutant and abnormal proteins as well as certain short-lived regulatory proteins. Required for cellular homeostasis and for survival from DNA damage and developmental changes induced by stress. Degrades polypeptides processively to yield small peptide fragments that are 5 to 10 amino acids long. Binds to DNA in a double-stranded, site-specific manner. The sequence is that of Lon protease from Desulfatibacillum aliphaticivorans.